Reading from the N-terminus, the 163-residue chain is Cell division protein SepF (163 aa).

The disordered stretch occupies residues 25–53 (SVAPHSGEERESAFSRRSAERAERTERPT). A compositionally biased stretch (basic and acidic residues) spans 30–51 (SGEERESAFSRRSAERAERTER).

Belongs to the SepF family. As to quaternary structure, homodimer. Interacts with FtsZ.

Its subcellular location is the cytoplasm. Cell division protein that is part of the divisome complex and is recruited early to the Z-ring. Probably stimulates Z-ring formation, perhaps through the cross-linking of FtsZ protofilaments. Its function overlaps with FtsA. The chain is Cell division protein SepF from Heliobacterium modesticaldum (strain ATCC 51547 / Ice1).